Reading from the N-terminus, the 356-residue chain is Ion-translocating oxidoreductase complex subunit D (356 aa).

Helical transmembrane passes span 20-40, 42-62, 68-88, and 117-137; these read LMLL…WFFG, GVLV…ALAI, PVGF…IGVS, and GFNP…SFPV. Position 177 is an FMN phosphoryl threonine (threonine 177). Helical transmembrane passes span 205 to 225, 229 to 249, 259 to 279, 292 to 312, and 315 to 335; these read WASA…LYLL, VYTW…AALF, GSPL…FIVT, VIYG…GSSY, and GVAF…YYTT.

This sequence belongs to the NqrB/RnfD family. The complex is composed of six subunits: RnfA, RnfB, RnfC, RnfD, RnfE and RnfG. It depends on FMN as a cofactor.

The protein localises to the cell inner membrane. Its function is as follows. Part of a membrane-bound complex that couples electron transfer with translocation of ions across the membrane. This is Ion-translocating oxidoreductase complex subunit D from Cellvibrio japonicus (strain Ueda107) (Pseudomonas fluorescens subsp. cellulosa).